A 317-amino-acid polypeptide reads, in one-letter code: Putative 2-hydroxyacid dehydrogenase SERP1888 (317 aa).

Residues 155–156 (EI), 234–236 (AGR), and Asp-260 contribute to the NAD(+) site. Residue Arg-236 is part of the active site. The active site involves Glu-265. His-283 acts as the Proton donor in catalysis. 283 to 286 (HIGN) provides a ligand contact to NAD(+).

The protein belongs to the D-isomer specific 2-hydroxyacid dehydrogenase family.

This Staphylococcus epidermidis (strain ATCC 35984 / DSM 28319 / BCRC 17069 / CCUG 31568 / BM 3577 / RP62A) protein is Putative 2-hydroxyacid dehydrogenase SERP1888.